Here is a 255-residue protein sequence, read N- to C-terminus: Imidazole glycerol phosphate synthase subunit HisF (255 aa).

Residues D11 and D130 contribute to the active site.

Belongs to the HisA/HisF family. Heterodimer of HisH and HisF.

Its subcellular location is the cytoplasm. It catalyses the reaction 5-[(5-phospho-1-deoxy-D-ribulos-1-ylimino)methylamino]-1-(5-phospho-beta-D-ribosyl)imidazole-4-carboxamide + L-glutamine = D-erythro-1-(imidazol-4-yl)glycerol 3-phosphate + 5-amino-1-(5-phospho-beta-D-ribosyl)imidazole-4-carboxamide + L-glutamate + H(+). It participates in amino-acid biosynthesis; L-histidine biosynthesis; L-histidine from 5-phospho-alpha-D-ribose 1-diphosphate: step 5/9. IGPS catalyzes the conversion of PRFAR and glutamine to IGP, AICAR and glutamate. The HisF subunit catalyzes the cyclization activity that produces IGP and AICAR from PRFAR using the ammonia provided by the HisH subunit. The polypeptide is Imidazole glycerol phosphate synthase subunit HisF (Prochlorococcus marinus subsp. pastoris (strain CCMP1986 / NIES-2087 / MED4)).